Here is a 132-residue protein sequence, read N- to C-terminus: Small ribosomal subunit protein uS8 (132 aa).

The protein belongs to the universal ribosomal protein uS8 family. In terms of assembly, part of the 30S ribosomal subunit. Contacts proteins S5 and S12.

Its function is as follows. One of the primary rRNA binding proteins, it binds directly to 16S rRNA central domain where it helps coordinate assembly of the platform of the 30S subunit. The chain is Small ribosomal subunit protein uS8 from Clostridioides difficile (strain 630) (Peptoclostridium difficile).